We begin with the raw amino-acid sequence, 467 residues long: MIILPIAKILQGIILAADHEVIVQGWVRTRRDSKAGISFLSIYDGSCLDSLQVIINHDLPNYKSDVLHLTTGCSVVITGSIVTSIGVGQHFEIQAKNIKVLGWVKNPETYPITAKKHSLEFLREVAHLRPRTNIIGAVTRVRHTLAQAIHRFMHIEGFFWVSTPLITTFNCEGAGEMFRVSTLDLENLPYTSKGKINYEKDFFGKEAFLTVSGQLNGESYACALSKIYTFGPTFRAENSNTSRHLAEFWMVEPEVAFANLTDIAILAEKMLKYIFNAILIERVDDINFFAEQINKNIIKRLEQFISSNFAQIDYTEAIDILQNCKQKFDHTVFWGMDLFAEHERYLADKHFQAPVVVTNYPKDIKAFYMRINDDGKTVAAMDVLAPGIGEIIGGSQREERLAKLDQRLADRGLNIEDYWWYRDLRSYGTVPHSGFGLGLERLMIYITGMHNIRDVIPFPRNPRQASF.

This sequence belongs to the class-II aminoacyl-tRNA synthetase family. Homodimer.

The protein localises to the cytoplasm. The catalysed reaction is tRNA(Asn) + L-asparagine + ATP = L-asparaginyl-tRNA(Asn) + AMP + diphosphate + H(+). The protein is Asparagine--tRNA ligase of Baumannia cicadellinicola subsp. Homalodisca coagulata.